The primary structure comprises 250 residues: MRRPLVVGNWKMNGRSASVARLLNDILAGIGDCKAEVGVCVPFVYIPQASEILKGTKVMLGAQNVADHNSGAFTGEISAGMLREFGCELAIVGHSERRLLYGESNELVASRYEQAIQGHLKPILCVGETLEQREQGRTLAVIGAQIDTVFEFAGVQSLEHAVIAYEPVWAVGTGRSATTGQAQEVHYHIRSLIARWNPEVAQAVQIIYGGSVKPENSAELFAMPDIDGGLIGGASLDARAFLSICHSVSV.

9-11 (NWK) contacts substrate. Catalysis depends on histidine 94, which acts as the Electrophile. The active-site Proton acceptor is glutamate 166. Substrate-binding positions include glycine 172, serine 211, and 232-233 (GG).

It belongs to the triosephosphate isomerase family. In terms of assembly, homodimer.

Its subcellular location is the cytoplasm. It carries out the reaction D-glyceraldehyde 3-phosphate = dihydroxyacetone phosphate. Its pathway is carbohydrate biosynthesis; gluconeogenesis. It participates in carbohydrate degradation; glycolysis; D-glyceraldehyde 3-phosphate from glycerone phosphate: step 1/1. Involved in the gluconeogenesis. Catalyzes stereospecifically the conversion of dihydroxyacetone phosphate (DHAP) to D-glyceraldehyde-3-phosphate (G3P). This is Triosephosphate isomerase from Methylococcus capsulatus (strain ATCC 33009 / NCIMB 11132 / Bath).